We begin with the raw amino-acid sequence, 111 residues long: Universal stress protein B (111 aa).

2 helical membrane-spanning segments follow: residues 1–21 and 90–110; these read MINTVALFWALFIVCVVNMLR and FILTSALCGLVVVALIALMLW.

Belongs to the universal stress protein B family.

Its subcellular location is the cell inner membrane. The sequence is that of Universal stress protein B from Edwardsiella ictaluri (strain 93-146).